The following is a 432-amino-acid chain: Monooxygenase penA (432 aa).

A helical transmembrane segment spans residues 7–29; that stretch reads FKIAIIGAGPAGLTLASLLTASP. A glycan (N-linked (GlcNAc...) asparagine) is linked at N33.

Belongs to the aromatic-ring hydroxylase family. It depends on FAD as a cofactor.

It localises to the membrane. Its pathway is secondary metabolite biosynthesis. It participates in alkaloid biosynthesis. It functions in the pathway mycotoxin biosynthesis. Its function is as follows. Monooxygenase; part of the gene cluster that mediates the biosynthesis of penigequinolones, potent insecticidal alkaloids that contain a highly modified 10-carbon prenyl group. The first stage is catalyzed by the nonribosomal peptide synthetase penN that condenses anthranilic acid and O-methyl-L-tyrosine to produce 4'-methoxycyclopeptin. 4'-methoxycyclopeptin is then converted to 4'-methoxydehydrocyclopeptin by the ketoglutarate-dependent dioxygenase penM through dehydrogenation to form a double bond between C-alpha and C-beta of the O-methyltyrosine side chain. PenM also converts its first product methoxydehydrocyclopeptin to 4'-methoxycyclopenin. The following conversion of 4'methoxycyclopenin into 4'-methoxyviridicatin is catalyzed by the cyclopenase penL. 4'-methoxyviridicatin is the precursor of quinolone natural products, and is further converted to quinolinone B. The prenyltransferase penI then catalyzes the canonical Friedel-Crafts alkylation of quinolinone B with dimethylallyl cation to yield dimethylallyl quinolone, which is subjected to FAD-dependent dehydrogenation by the FAD-linked oxidoreductase penH to yield conjugated aryl diene. The delta(3') double bond then serves as the site of the second alkylation with DMAPP catalyzed by the prenyltransferase penG to yield a carbenium ion intermediate, which can be attacked by H(2)O to yield a styrenyl quinolone containing a C3'-hydroxyprenyl chain, or undergo cyclization to yield yaequinolones J1 and J2. The conversion of the styrenyl quinolone into the tetrahydrofuran-containing yaequinolone C is performed by the FAD-dependent monooxygenase penE and involves epoxidation of the terminal C7'-C8' olefin, followed by epoxide ring opening initiated by the C3' hydroxyl group. The predicted cysteine hydrolase penJ acts as an epoxide hydrolase that enhances the rate of the 5-exo-tet cyclization step, increasing the yield of yaequinolone C. PenF catalyzes the cationic rearrangement of the epoxide formed by penE (before ring opening to produce yaequinolone C) into yaequinolone D. Finally, the short-chain dehydrogenase/reductase (SDR)-like reductase penD, catalyzes both the dehydration of yaequinolone D and the reduction of the resulting oxonium to yield penigequinolone. The protein is Monooxygenase penA of Penicillium thymicola.